A 113-amino-acid chain; its full sequence is Small ribosomal subunit protein bS18 (113 aa).

A disordered region spans residues 1–41 (MSEEKIVNTEAAPEAVAERPARAERSERPERPAKGPFGKKR). Residues 16–33 (VAERPARAERSERPERPA) are compositionally biased toward basic and acidic residues.

It belongs to the bacterial ribosomal protein bS18 family. As to quaternary structure, part of the 30S ribosomal subunit. Forms a tight heterodimer with protein bS6.

Binds as a heterodimer with protein bS6 to the central domain of the 16S rRNA, where it helps stabilize the platform of the 30S subunit. The polypeptide is Small ribosomal subunit protein bS18 (Elusimicrobium minutum (strain Pei191)).